The following is a 71-amino-acid chain: Putative membrane protein insertion efficiency factor (71 aa).

The protein belongs to the UPF0161 family.

Its subcellular location is the cell membrane. Could be involved in insertion of integral membrane proteins into the membrane. This is Putative membrane protein insertion efficiency factor from Desulforudis audaxviator (strain MP104C).